A 168-amino-acid chain; its full sequence is MTTDTASNGNGSAQQQSPSLNILAQYVKDLSFENPGAPRSLQARDRSPSININVNVNANPLAENDFDVVLSLSAQAKDGDKMLFNVELAYGGVFRVAGFPQEHMLPLLFIECPRLLFPFARQIVADATRNGGFPPLMIDPIDFAQMFAQRMAEEKVRAQVANTNDTAN.

This sequence belongs to the SecB family. As to quaternary structure, homotetramer, a dimer of dimers. One homotetramer interacts with 1 SecA dimer.

The protein localises to the cytoplasm. Its function is as follows. One of the proteins required for the normal export of preproteins out of the cell cytoplasm. It is a molecular chaperone that binds to a subset of precursor proteins, maintaining them in a translocation-competent state. It also specifically binds to its receptor SecA. The polypeptide is Protein-export protein SecB (Rhizobium meliloti (strain 1021) (Ensifer meliloti)).